The following is a 942-amino-acid chain: Protein translocase subunit SecA (942 aa).

Residues Gln90, Gly108 to Thr112, and Asp509 each bind ATP.

This sequence belongs to the SecA family. Monomer and homodimer. Part of the essential Sec protein translocation apparatus which comprises SecA, SecYEG and auxiliary proteins SecDF. Other proteins may also be involved.

The protein resides in the cell inner membrane. It localises to the cellular thylakoid membrane. The protein localises to the cytoplasm. The enzyme catalyses ATP + H2O + cellular proteinSide 1 = ADP + phosphate + cellular proteinSide 2.. Functionally, part of the Sec protein translocase complex. Interacts with the SecYEG preprotein conducting channel. Has a central role in coupling the hydrolysis of ATP to the transfer of proteins into and across the cell membrane, serving as an ATP-driven molecular motor driving the stepwise translocation of polypeptide chains across the membrane. In terms of biological role, probably participates in protein translocation into and across both the cytoplasmic and thylakoid membranes in cyanobacterial cells. The polypeptide is Protein translocase subunit SecA (Prochlorococcus marinus (strain NATL2A)).